Reading from the N-terminus, the 589-residue chain is Deoxynucleoside triphosphate triphosphohydrolase SAMHD1 (589 aa).

M1 bears the N-acetylmethionine mark. Over residues M1 to P10 the composition is skewed to polar residues. The disordered stretch occupies residues M1–D41. S18 is subject to Phosphoserine. T21 is subject to Phosphothreonine. 2 positions are modified to phosphoserine: S33 and S88. The SAM domain occupies W45 to Q100. The GTP site is built by K104 and V105. N107 is a dGTP binding site. Residues D125, Q130, and R133 each coordinate GTP. 4 residues coordinate dGTP: Q137, L138, V144, and R152. Position 137 (Q137) interacts with dATP. Q137 provides a ligand contact to dCTP. Residue Q137 coordinates dTTP. R152 is a binding site for dATP. Position 152 (R152) interacts with dCTP. DTTP is bound at residue R152. The 126-residue stretch at R152 to K277 folds into the HD domain. Mn(2+) is bound by residues H155, H194, and D195. The dATP site is built by H198 and H203. 2 residues coordinate dCTP: H198 and H203. DTTP is bound by residues H198 and H203. H221 is a catalytic residue. D300 provides a ligand contact to Mn(2+). K301, Y304, D308, R322, R341, K343, N347, R355, Y363, Q364, H365, and K366 together coordinate dGTP. The dATP site is built by K301, Y304, and D308. 3 residues coordinate dCTP: K301, Y304, and D308. K301, Y304, and D308 together coordinate dTTP. DATP is bound at residue R355. Residue R355 coordinates dCTP. Q364 serves as a coordination point for dATP. A dCTP-binding site is contributed by Q364. Q364 lines the dTTP pocket. GTP-binding residues include R440 and K444. Residue K457 forms a Glycyl lysine isopeptide (Lys-Gly) (interchain with G-Cter in SUMO2) linkage. A GTP-binding site is contributed by K512. K512 is a dGTP binding site.

The protein belongs to the SAMHD1 family. In terms of assembly, homodimer; in absence of GTP and dNTP. Homotetramer; in GTP- and dNTP-bound form. Interacts with MRE11; leading to stimulate the exonuclease activity of MRE11. Interacts with RBBP8/CtIP. Interacts (via its C-terminus) with CD81. The cofactor is Zn(2+).

It is found in the nucleus. It localises to the chromosome. The catalysed reaction is a 2'-deoxyribonucleoside 5'-triphosphate + H2O = a 2'-deoxyribonucleoside + triphosphate + H(+). It catalyses the reaction dATP + H2O = 2'-deoxyadenosine + triphosphate + H(+). It carries out the reaction dCTP + H2O = 2'-deoxycytidine + triphosphate + H(+). The enzyme catalyses dGTP + H2O = 2'-deoxyguanosine + triphosphate + H(+). The catalysed reaction is dTTP + H2O = thymidine + triphosphate + H(+). Allosterically activated and regulated via the combined actions of GTP and dNTPs (dATP, dGTP, dTTP and dCTP): Allosteric site 1 binds GTP, while allosteric site 2 binds dNTP. Allosteric activation promotes the formation of highly active homotetramers. Functionally, protein that acts both as a host restriction factor involved in defense response to virus and as a regulator of DNA end resection at stalled replication forks. Has deoxynucleoside triphosphate (dNTPase) activity, which is required to restrict infection by viruses: dNTPase activity reduces cellular dNTP levels to levels too low for retroviral reverse transcription to occur, blocking early-stage virus replication in dendritic and other myeloid cells. Likewise, suppresses LINE-1 retrotransposon activity. In addition to virus restriction, dNTPase activity acts as a regulator of DNA precursor pools by regulating dNTP pools. Functions during S phase at stalled DNA replication forks to promote the resection of gapped or reversed forks: acts by stimulating the exonuclease activity of MRE11, activating the ATR-CHK1 pathway and allowing the forks to restart replication. Its ability to promote degradation of nascent DNA at stalled replication forks is required to prevent induction of type I interferons, thereby preventing chronic inflammation. Ability to promote DNA end resection at stalled replication forks is independent of dNTPase activity. Enhances immunoglobulin hypermutation in B-lymphocytes by promoting transversion mutation. The sequence is that of Deoxynucleoside triphosphate triphosphohydrolase SAMHD1 from Bos taurus (Bovine).